Here is a 370-residue protein sequence, read N- to C-terminus: Glutamate 5-kinase (370 aa).

Lys-17 serves as a coordination point for ATP. Substrate contacts are provided by Ser-56, Asp-143, and Asn-155. 175-176 (SD) serves as a coordination point for ATP. Residues 280–357 (KGEITVDAGA…DEIEGILGYP (78 aa)) enclose the PUA domain.

The protein belongs to the glutamate 5-kinase family.

Its subcellular location is the cytoplasm. The enzyme catalyses L-glutamate + ATP = L-glutamyl 5-phosphate + ADP. The protein operates within amino-acid biosynthesis; L-proline biosynthesis; L-glutamate 5-semialdehyde from L-glutamate: step 1/2. Catalyzes the transfer of a phosphate group to glutamate to form L-glutamate 5-phosphate. The chain is Glutamate 5-kinase from Paracoccus denitrificans (strain Pd 1222).